We begin with the raw amino-acid sequence, 92 residues long: Small ribosomal subunit protein uS19 (92 aa).

This sequence belongs to the universal ribosomal protein uS19 family.

In terms of biological role, protein S19 forms a complex with S13 that binds strongly to the 16S ribosomal RNA. The polypeptide is Small ribosomal subunit protein uS19 (Agrobacterium fabrum (strain C58 / ATCC 33970) (Agrobacterium tumefaciens (strain C58))).